Reading from the N-terminus, the 227-residue chain is ATP synthase F(0) complex subunit a (227 aa).

6 helical membrane-spanning segments follow: residues 14-34, 69-89, 98-118, 139-159, 165-185, and 189-209; these read FLGI…FPSP, WAMI…LGLL, QLSM…LIGM, IPIL…ALGV, LTAG…MLSI, and IATL…AVAM.

The protein belongs to the ATPase A chain family. Component of the ATP synthase complex composed at least of ATP5F1A/subunit alpha, ATP5F1B/subunit beta, ATP5MC1/subunit c (homooctomer), MT-ATP6/subunit a, MT-ATP8/subunit 8, ATP5ME/subunit e, ATP5MF/subunit f, ATP5MG/subunit g, ATP5MK/subunit k, ATP5MJ/subunit j, ATP5F1C/subunit gamma, ATP5F1D/subunit delta, ATP5F1E/subunit epsilon, ATP5PF/subunit F6, ATP5PB/subunit b, ATP5PD/subunit d, ATP5PO/subunit OSCP. ATP synthase complex consists of a soluble F(1) head domain (subunits alpha(3) and beta(3)) - the catalytic core - and a membrane F(0) domain - the membrane proton channel (subunits c, a, 8, e, f, g, k and j). These two domains are linked by a central stalk (subunits gamma, delta, and epsilon) rotating inside the F1 region and a stationary peripheral stalk (subunits F6, b, d, and OSCP). Interacts with DNAJC30; interaction is direct.

It localises to the mitochondrion inner membrane. It carries out the reaction H(+)(in) = H(+)(out). Its function is as follows. Subunit a, of the mitochondrial membrane ATP synthase complex (F(1)F(0) ATP synthase or Complex V) that produces ATP from ADP in the presence of a proton gradient across the membrane which is generated by electron transport complexes of the respiratory chain. ATP synthase complex consist of a soluble F(1) head domain - the catalytic core - and a membrane F(1) domain - the membrane proton channel. These two domains are linked by a central stalk rotating inside the F(1) region and a stationary peripheral stalk. During catalysis, ATP synthesis in the catalytic domain of F(1) is coupled via a rotary mechanism of the central stalk subunits to proton translocation. With the subunit c (ATP5MC1), forms the proton-conducting channel in the F(0) domain, that contains two crucial half-channels (inlet and outlet) that facilitate proton movement from the mitochondrial intermembrane space (IMS) into the matrix. Protons are taken up via the inlet half-channel and released through the outlet half-channel, following a Grotthuss mechanism. In Polypterus ornatipinnis (Ornate bichir), this protein is ATP synthase F(0) complex subunit a.